The primary structure comprises 323 residues: Calcium homeostasis modulator protein 2 (323 aa).

The Cytoplasmic portion of the chain corresponds to 1–21 (MAALIAENFRFLSLFFKSKDV). Residues 14–39 (LFFKSKDVMIFNGLVALGTVGSQELF) are central pore. The chain crosses the membrane as a helical span at residues 22 to 43 (MIFNGLVALGTVGSQELFSVVA). The Extracellular portion of the chain corresponds to 44–52 (FHCPCSPAR). Intrachain disulfides connect cysteine 46-cysteine 130 and cysteine 48-cysteine 162. The chain crosses the membrane as a helical span at residues 53-76 (NYLYGLTAIGVPALALFLIGVILN). Topologically, residues 77 to 101 (NHTWNLVAECQYRRAKNCSAAPTFL) are cytoplasmic. Residues 102-132 (LLSSILGRAAVAPVTWSVISLLRGEAYVCAL) form a helical membrane-spanning segment. Residues 133–179 (SEFVDPSSLTAGDEGFPPDHATEILARFPCGEGPANLSGFREEVSRR) lie on the Extracellular side of the membrane. The interval 145–152 (DEGFPPDH) is hemichannel docking. The helical transmembrane segment at 180-206 (LKYESQLFGWLLIGVVAILVFLTKCFK) threads the bilayer. The Cytoplasmic segment spans residues 207-323 (HYCSPLSYRQ…DNVEMALLTV (117 aa)). The intersubunit interaction stretch occupies residues 214–251 (YRQEAYWAQYRTNEDQLFQRTAEVHSRVLAANNVRRFF).

Belongs to the CALHM family. As to quaternary structure, homo-undecamer. Two undecameric hemichannels can assemble in a head-to-head manner to form a gap junction.

The protein resides in the cell membrane. It catalyses the reaction ATP(in) = ATP(out). Its function is as follows. Pore-forming subunit of Ca(2+) homeostasis modulator channels. Mediates ATP release from astrocytes and ATP-induced Ca(2+) influx in microglia thus regulating neuronal ATP and Ca(2+) homeostasis, synaptic transmission and neuroinflammatory response. May form intercellular gap junctions. The gating mechanism remains unknown. In Rattus norvegicus (Rat), this protein is Calcium homeostasis modulator protein 2 (Calhm2).